The chain runs to 440 residues: Transposon Ty1-PR2 Gag polyprotein (440 aa).

Composition is skewed to polar residues over residues 1–10 (MESQQLSNYP), 48–60 (TKANSQQTTTPAS), and 127–152 (QSQFPQYPSSVGTPLSTPSPESGNTF). Disordered regions lie at residues 1-93 (MESQ…MMTQ), 126-173 (PQSQ…RPPP), and 352-440 (GSRN…PETY). The segment covering 153-165 (TDSSSADSDMTST) has biased composition (low complexity). The segment at 299 to 401 (NNGIHINNKV…NSKSKTARAH (103 aa)) is RNA-binding. Positions 402–418 (NVSTSNNSPSTDNDSIS) are enriched in low complexity. Ser-416 carries the phosphoserine modification. Over residues 419–428 (KSTTEPIQLN) the composition is skewed to polar residues. Positions 429-440 (NKHDLHLRPETY) are enriched in basic and acidic residues.

Homotrimer.

It localises to the cytoplasm. Capsid protein (CA) is the structural component of the virus-like particle (VLP), forming the shell that encapsulates the retrotransposons dimeric RNA genome. The particles are assembled from trimer-clustered units and there are holes in the capsid shells that allow for the diffusion of macromolecules. CA also has nucleocapsid-like chaperone activity, promoting primer tRNA(i)-Met annealing to the multipartite primer-binding site (PBS), dimerization of Ty1 RNA and initiation of reverse transcription. The protein is Transposon Ty1-PR2 Gag polyprotein (TY1A-PR2) of Saccharomyces cerevisiae (strain ATCC 204508 / S288c) (Baker's yeast).